Here is a 401-residue protein sequence, read N- to C-terminus: Acetate kinase (401 aa).

Asn-9 lines the Mg(2+) pocket. Lys-16 serves as a coordination point for ATP. Arg-88 serves as a coordination point for substrate. The active-site Proton donor/acceptor is the Asp-147. ATP contacts are provided by residues His-207–Gly-211, Asp-282–Arg-284, and Gly-333–Asn-337. Glu-388 serves as a coordination point for Mg(2+).

Belongs to the acetokinase family. In terms of assembly, homodimer. It depends on Mg(2+) as a cofactor. Mn(2+) is required as a cofactor.

It is found in the cytoplasm. The enzyme catalyses acetate + ATP = acetyl phosphate + ADP. It participates in metabolic intermediate biosynthesis; acetyl-CoA biosynthesis; acetyl-CoA from acetate: step 1/2. Functionally, catalyzes the formation of acetyl phosphate from acetate and ATP. Can also catalyze the reverse reaction. This Haemophilus influenzae (strain ATCC 51907 / DSM 11121 / KW20 / Rd) protein is Acetate kinase.